The sequence spans 408 residues: 8-amino-7-oxononanoate synthase (408 aa).

Arginine 20 contributes to the substrate binding site. 117-118 is a pyridoxal 5'-phosphate binding site; that stretch reads GY. Histidine 142 provides a ligand contact to substrate. 3 residues coordinate pyridoxal 5'-phosphate: serine 188, histidine 216, and threonine 244. N6-(pyridoxal phosphate)lysine is present on lysine 247. Threonine 367 contacts substrate.

It belongs to the class-II pyridoxal-phosphate-dependent aminotransferase family. BioF subfamily. As to quaternary structure, homodimer. The cofactor is pyridoxal 5'-phosphate.

The catalysed reaction is 6-carboxyhexanoyl-[ACP] + L-alanine + H(+) = (8S)-8-amino-7-oxononanoate + holo-[ACP] + CO2. The protein operates within cofactor biosynthesis; biotin biosynthesis. Catalyzes the decarboxylative condensation of pimeloyl-[acyl-carrier protein] and L-alanine to produce 8-amino-7-oxononanoate (AON), [acyl-carrier protein], and carbon dioxide. The chain is 8-amino-7-oxononanoate synthase from Cupriavidus pinatubonensis (strain JMP 134 / LMG 1197) (Cupriavidus necator (strain JMP 134)).